The primary structure comprises 491 residues: Nickel-binding protein NikA (491 aa).

Positions Met-1–Gly-18 are cleaved as a signal peptide. Residue Cys-19 is the site of N-palmitoyl cysteine attachment. A lipid anchor (S-diacylglycerol cysteine) is attached at Cys-19.

It belongs to the bacterial solute-binding protein 5 family. In terms of assembly, the complex is composed of two ATP-binding proteins (NikD and NikE), two transmembrane proteins (NikB and NikC) and a solute-binding protein (NikA).

Its subcellular location is the cell membrane. Functionally, part of the ABC transporter complex NikABCDE (Opp2) involved in nickel import. Binds nickel and transfers it to the membrane-bound permease. Required for full urease activity and plays a significant role in the virulence of S.aureus during urinary tract infection (UTI). May bind nickel via a nickel-chelator. The sequence is that of Nickel-binding protein NikA from Staphylococcus aureus (strain NCTC 8325 / PS 47).